The sequence spans 421 residues: Testin (421 aa).

A PET domain is found at 92–199 (MILTNPVAAK…GDVKLPCEMD (108 aa)). Positions 133-164 (EKQPVAGSEGAQYRKKQLAKQLPAHDQDPSKC) are disordered. Basic and acidic residues predominate over residues 155-164 (PAHDQDPSKC). 3 LIM zinc-binding domains span residues 234–297 (YFCY…CDSE), 299–359 (PRCA…NHAV), and 362–421 (QGCH…KMMS).

It belongs to the prickle / espinas / testin family. Interacts via LIM domain 1 with ZYX. Interacts (via LIM domain 3) with ENAH and VASP. Interacts with ALKBH4, talin, actin, alpha-actinin, GRIP1 and PXN. Interacts (via LIM domain 2) with ACTL7A (via N-terminus). Heterodimer with ACTL7A; the heterodimer interacts with ENAH to form a heterotrimer.

The protein resides in the cytoplasm. The protein localises to the cell junction. It is found in the focal adhesion. Scaffold protein that may play a role in cell adhesion, cell spreading and in the reorganization of the actin cytoskeleton. Plays a role in the regulation of cell proliferation. May act as a tumor suppressor. This chain is Testin (TES), found in Plecturocebus moloch (Dusky titi monkey).